The chain runs to 670 residues: Solute carrier organic anion transporter family member 1A4 (670 aa).

Over 1-20 (MGKSEKEVATHGVRCFSKIK) the chain is Cytoplasmic. The chain crosses the membrane as a helical span at residues 21-40 (AFLLALTCAYVSKSLSGTYM). Topologically, residues 41 to 59 (NSMLTQIERQFGIPTSVVG) are extracellular. The chain crosses the membrane as a helical span at residues 60–80 (LINGSFEIGNLLLIIFVSYFG). Residues 81-86 (TKLHRP) are Cytoplasmic-facing. The helical transmembrane segment at 87 to 111 (IMIGVGCAVMGLGCFLISIPHFLMG) threads the bilayer. The Extracellular segment spans residues 112–155 (RYEYETTILPTSNLSSNSFVCTENRTQTLKPTQDPTECVKEMKS). N-linked (GlcNAc...) asparagine glycans are attached at residues asparagine 124 and asparagine 135. A helical membrane pass occupies residues 156 to 184 (LMWIYVLVGNIIRGMGETPIMPLGISYIE). Residues 185 to 203 (DFAKSENSPLYIGILETGM) lie on the Cytoplasmic side of the membrane. Residues 204-224 (TIGPLIGLLLGSSCANIYVDT) traverse the membrane as a helical segment. Residues 225–242 (GSVNTDDLTITPTDTRWV) lie on the Extracellular side of the membrane. A helical membrane pass occupies residues 243–267 (GAWWIGFLVCAGVNILTSIPFFFFP). The Cytoplasmic portion of the chain corresponds to 268 to 311 (KTLLKEGLQDNGDGTENAKEEKHREKIKEENRGITKDFFLFMKS). A helical transmembrane segment spans residues 312 to 333 (LSCNPIYMIFILISVIQVNAFI). Residues 334 to 353 (NSFTFMPKYLEQQYGKSTAE) lie on the Extracellular side of the membrane. Residues 354–377 (IVFLMGLYMLPPICLGYLIGGLIM) traverse the membrane as a helical segment. The Cytoplasmic portion of the chain corresponds to 378-381 (KKFK). The chain crosses the membrane as a helical span at residues 382–405 (ITVKKAAYIGFWLSLTEYLLSFVS). At 406 to 513 (YIMTCDNFPV…PECANKLQYF (108 aa)) the chain is on the extracellular side. A Kazal-like domain is found at 433–488 (NNVLADCNTKCSCLTNTWDPVCGDNGLSYMSACLAGCEKSVGTGTNMVFQNCSCIQ). Cystine bridges form between cysteine 439/cysteine 469, cysteine 445/cysteine 465, and cysteine 454/cysteine 486. N-linked (GlcNAc...) asparagine glycosylation is found at asparagine 483 and asparagine 492. A helical transmembrane segment spans residues 514–536 (LIISIIGCFIFSLGAIPGYMVLL). Residues 537 to 545 (RCMKSEEKS) lie on the Cytoplasmic side of the membrane. Residues 546-571 (LGVGLHTFCMRILGGIPAPIYFGALI) traverse the membrane as a helical segment. Over 572-605 (DRTCLHWGTLKCGEPGACRMYDINSFRRIYLGLP) the chain is Extracellular. A helical membrane pass occupies residues 606–623 (AALRGASFLPALFILILM). Topologically, residues 624-670 (RKFQFPGDIDSSDTDPAEMKLTAKESKCTNVHRSPTMQNDGERKTKL) are cytoplasmic. Phosphoserine is present on residues serine 634 and serine 635. Residues 649–670 (SKCTNVHRSPTMQNDGERKTKL) are disordered. The span at 651-662 (CTNVHRSPTMQN) shows a compositional bias: polar residues.

This sequence belongs to the organo anion transporter (TC 2.A.60) family. As to expression, highly expressed in brain and liver. Detected at very low levels in heart and lung.

The protein resides in the cell membrane. It carries out the reaction estrone 3-sulfate(out) = estrone 3-sulfate(in). The enzyme catalyses taurocholate(out) = taurocholate(in). The catalysed reaction is prostaglandin E2(out) = prostaglandin E2(in). It catalyses the reaction L-thyroxine(out) = L-thyroxine(in). In terms of biological role, mediates the Na(+)-independent transport of organic anions such as taurocholate, cholate, 17-beta-glucuronosyl estradiol, prostaglandin E2, estrone 3-sulfate, L-thyroxine (T4), the cardiac glycosides ouabain and digoxin and thyroid hormones. Shows a pH-sensitive substrate specificity which may be ascribed to the protonation state of the binding site and leads to a stimulation of substrate transport in an acidic microenvironment. Hydrogencarbonate/HCO3(-) acts as the probable counteranion that exchanges for organic anions. In Mus musculus (Mouse), this protein is Solute carrier organic anion transporter family member 1A4 (Slco1a4).